The chain runs to 72 residues: Translation initiation factor IF-1 (72 aa).

The region spanning 1 to 72 is the S1-like domain; sequence MSKEELLEFP…TKGRITYRFK (72 aa).

It belongs to the IF-1 family. In terms of assembly, component of the 30S ribosomal translation pre-initiation complex which assembles on the 30S ribosome in the order IF-2 and IF-3, IF-1 and N-formylmethionyl-tRNA(fMet); mRNA recruitment can occur at any time during PIC assembly.

It localises to the cytoplasm. Its function is as follows. One of the essential components for the initiation of protein synthesis. Stabilizes the binding of IF-2 and IF-3 on the 30S subunit to which N-formylmethionyl-tRNA(fMet) subsequently binds. Helps modulate mRNA selection, yielding the 30S pre-initiation complex (PIC). Upon addition of the 50S ribosomal subunit IF-1, IF-2 and IF-3 are released leaving the mature 70S translation initiation complex. This chain is Translation initiation factor IF-1, found in Parvibaculum lavamentivorans (strain DS-1 / DSM 13023 / NCIMB 13966).